We begin with the raw amino-acid sequence, 298 residues long: Putative S-adenosyl-L-methionine-dependent methyltransferase MSMEG_1480/MSMEI_1444 (298 aa).

S-adenosyl-L-methionine-binding positions include Asp127 and 156-157 (DL).

It belongs to the UPF0677 family.

Its function is as follows. Exhibits S-adenosyl-L-methionine-dependent methyltransferase activity. This Mycolicibacterium smegmatis (strain ATCC 700084 / mc(2)155) (Mycobacterium smegmatis) protein is Putative S-adenosyl-L-methionine-dependent methyltransferase MSMEG_1480/MSMEI_1444.